The sequence spans 435 residues: ATP-dependent protease ATPase subunit HslU (435 aa).

ATP contacts are provided by residues isoleucine 18, 60–65 (GVGKTE), aspartate 248, glutamate 313, and arginine 385.

It belongs to the ClpX chaperone family. HslU subfamily. A double ring-shaped homohexamer of HslV is capped on each side by a ring-shaped HslU homohexamer. The assembly of the HslU/HslV complex is dependent on binding of ATP.

The protein localises to the cytoplasm. ATPase subunit of a proteasome-like degradation complex; this subunit has chaperone activity. The binding of ATP and its subsequent hydrolysis by HslU are essential for unfolding of protein substrates subsequently hydrolyzed by HslV. HslU recognizes the N-terminal part of its protein substrates and unfolds these before they are guided to HslV for hydrolysis. This chain is ATP-dependent protease ATPase subunit HslU, found in Rhizobium johnstonii (strain DSM 114642 / LMG 32736 / 3841) (Rhizobium leguminosarum bv. viciae).